A 195-amino-acid chain; its full sequence is Cytochrome b-245 light chain (195 aa).

At 2–7 the chain is on the cytoplasmic side; it reads GQIEWA. Residues 8 to 30 traverse the membrane as a helical segment; sequence MWANEQALASGLILITGGIVATA. At 31 to 35 the chain is on the extracellular side; the sequence is GRFTQ. A helical transmembrane segment spans residues 36-53; it reads WYFGAYSIVAGVFVCLLE. Over 54–69 the chain is Cytoplasmic; that stretch reads YPRGKRKKGSTMERWG. Residues 70–80 lie within the membrane without spanning it; it reads QKYMTAVVKLF. Residues 81 to 86 lie on the Cytoplasmic side of the membrane; sequence GPFTRN. A helical membrane pass occupies residues 87–104; the sequence is YYVRAVLHLLLSVPAGFL. Position 105 (Leu105) is a topological domain, extracellular. Residues 106-126 form a helical membrane-spanning segment; it reads ATILGTACLAIASGIYLLAAV. Residues 127–195 are Cytoplasmic-facing; it reads RGEQWTPIEP…NPIPVTDEVV (69 aa). The interval 134 to 195 is disordered; sequence IEPKPRERPQ…NPIPVTDEVV (62 aa). At Thr147 the chain carries Phosphothreonine. A Glycyl lysine isopeptide (Lys-Gly) (interchain with G-Cter in ubiquitin) cross-link involves residue Lys149. Position 168 is a phosphoserine (Ser168).

The protein belongs to the p22phox family. As to quaternary structure, component of the phagocyte NADPH oxidase core complex/cytochrome b558 complex, composed of CYBB (heavy chain (beta)) and CYBA (light chain (alpha)). Component of the phagocyte NADPH oxidase complex composed of an obligatory core heterodimer formed by the membrane proteins CYBA and CYBB and the cytosolic regulatory subunits NCF1/p47-phox, NCF2/p67-phox, NCF4/p40-phox and the small GTPase RAC1 or RAC2. Interacts with NCF1 (via SH3 domain). Interacts with SH3PXD2A. Interacts with DUOX1, DUOX2 and TPO. Interacts with NOX4; this interaction mediates superoxide generation. Interacts with calprotectin (S100A8/9). Interacts with GBP7. Interacts with NOXO1. Forms a heterodimer with NOX3 and is essential for activity and cell membrane localization of NOX3. Interacts with NOX1. Phosphorylation at Thr-147 enhances NADPH oxidase activity by promoting NCF1/p47-phox binding. Post-translationally, ubiquitinated at Lys-149 likely by RNF145.

It is found in the cell membrane. In terms of biological role, subunit of NADPH oxidase complexes that is required for the NADPH oxidase activity that generates, in various cell types, superoxide from molecular oxygen utilizing NADPH as an electron donor. Subunit of the phagocyte NADPH oxidase complex that mediates the transfer of electrons from cytosolic NADPH to O2 to produce the superoxide anion (O2(-)). In the activated complex, electrons are first transferred from NADPH to flavin adenine dinucleotide (FAD) and subsequently transferred via two heme molecules to molecular oxygen, producing superoxide through an outer-sphere reaction. Activation of the NADPH oxidase complex is initiated by the assembly of cytosolic subunits of the NADPH oxidase complex with the core NADPH oxidase complex to form a complex at the plasma membrane or phagosomal membrane. This activation process is initiated by phosphorylation dependent binding of the cytosolic NCF1/p47-phox subunit to the C-terminus of CYBA/p22-phox. Aassociates with NOX3 to form a functional NADPH oxidase constitutively generating superoxide. In Homo sapiens (Human), this protein is Cytochrome b-245 light chain.